The following is a 1779-amino-acid chain: 5-methyl-1-naphthoate synthase (1779 aa).

In terms of domain architecture, Ketosynthase family 3 (KS3) spans 10-433 (VEPLAVIGMS…GSIAHAVLQQ (424 aa)). Active-site for beta-ketoacyl synthase activity residues include Cys-181, His-316, and His-356. The segment at 902-1027 (HTLIGARTTV…ATVVHEPEVG (126 aa)) is N-terminal hotdog fold. The 279-residue stretch at 902–1180 (HTLIGARTTV…YVKVQDIGSG (279 aa)) folds into the PKS/mFAS DH domain. The tract at residues 1042–1180 (PVSWTWAKVD…YVKVQDIGSG (139 aa)) is C-terminal hotdog fold. A Carrier domain is found at 1664–1742 (GELPELVLKV…ALAEFLAAEV (79 aa)). Ser-1702 carries the O-(pantetheine 4'-phosphoryl)serine modification. Positions 1746-1771 (TADAEETDPVAGLPAPQQGSGTAEQL) are disordered.

It carries out the reaction 5 malonyl-CoA + acetyl-CoA + 3 NADPH + 7 H(+) = 5-methyl-1-naphthoate + 5 CO2 + 3 NADP(+) + 6 CoA + 4 H2O. Its pathway is antibiotic biosynthesis. Polyketide synthase that catalyzes the biosynthesis of the bicyclic aromatic compound 5-methyl-1-naphthoate in the biosynthesis of the antitumor antibiotic azinomycin B. This is 5-methyl-1-naphthoate synthase from Streptomyces sahachiroi.